The sequence spans 489 residues: Lysine--tRNA ligase (489 aa).

Residues Glu399 and Glu406 each coordinate Mg(2+).

The protein belongs to the class-II aminoacyl-tRNA synthetase family. Homodimer. Mg(2+) is required as a cofactor.

The protein localises to the cytoplasm. It catalyses the reaction tRNA(Lys) + L-lysine + ATP = L-lysyl-tRNA(Lys) + AMP + diphosphate. This Roseiflexus castenholzii (strain DSM 13941 / HLO8) protein is Lysine--tRNA ligase.